The primary structure comprises 216 residues: UPF0502 protein Pfl01_3711 (216 aa).

The protein belongs to the UPF0502 family.

The protein is UPF0502 protein Pfl01_3711 of Pseudomonas fluorescens (strain Pf0-1).